The primary structure comprises 145 residues: Anaerobic nitrite reductase NSHB5 (145 aa).

The region spanning 2 to 142 (GFSETQEELV…LAAAIKEEMK (141 aa)) is the Globin domain. A Homodimerization motif is present at residues 35-39 (EIAPA). Heme b is bound by residues Ser45, His59, Lys61, Arg84, Thr88, and His89. Residues 96 to 108 (DAYFEVVKTALLD) carry the Homodimerization motif.

This sequence belongs to the plant globin family. Homodimer. The cofactor is heme b. In terms of tissue distribution, expressed in embryonic (embryos, coleoptiles and seminal roots) and vegetative (leaves and roots) organs.

It localises to the cytoplasm. It is found in the nucleus. It catalyses the reaction Fe(III)-heme b-[protein] + nitric oxide + H2O = Fe(II)-heme b-[protein] + nitrite + 2 H(+). In terms of biological role, phytoglobin that reduces nitrite to nitric oxide under anoxic conditions (e.g. during flooding or in waterlogged soil). May not function as an oxygen storage or transport protein. Has an unusually high affinity for O(2) through an hexacoordinate heme iron because of a very low dissociation constant. In Oryza sativa subsp. japonica (Rice), this protein is Anaerobic nitrite reductase NSHB5.